Reading from the N-terminus, the 431-residue chain is Adenylosuccinate lyase (431 aa).

N(6)-(1,2-dicarboxyethyl)-AMP is bound by residues 4 to 5 (RY), 67 to 69 (RHD), and 93 to 94 (TS). His141 acts as the Proton donor/acceptor in catalysis. Residue Gln212 participates in N(6)-(1,2-dicarboxyethyl)-AMP binding. Residue Ser262 is the Proton donor/acceptor of the active site. N(6)-(1,2-dicarboxyethyl)-AMP-binding positions include Ser263, 268 to 270 (KRN), Asn276, and 307 to 311 (SAERI).

It belongs to the lyase 1 family. Adenylosuccinate lyase subfamily. In terms of assembly, homodimer and homotetramer. Residues from neighboring subunits contribute catalytic and substrate-binding residues to each active site.

It catalyses the reaction N(6)-(1,2-dicarboxyethyl)-AMP = fumarate + AMP. The catalysed reaction is (2S)-2-[5-amino-1-(5-phospho-beta-D-ribosyl)imidazole-4-carboxamido]succinate = 5-amino-1-(5-phospho-beta-D-ribosyl)imidazole-4-carboxamide + fumarate. Its pathway is purine metabolism; AMP biosynthesis via de novo pathway; AMP from IMP: step 2/2. It participates in purine metabolism; IMP biosynthesis via de novo pathway; 5-amino-1-(5-phospho-D-ribosyl)imidazole-4-carboxamide from 5-amino-1-(5-phospho-D-ribosyl)imidazole-4-carboxylate: step 2/2. Catalyzes two reactions in de novo purine nucleotide biosynthesis. Catalyzes the breakdown of 5-aminoimidazole- (N-succinylocarboxamide) ribotide (SAICAR or 2-[5-amino-1-(5-phospho-beta-D-ribosyl)imidazole-4-carboxamido]succinate) to 5-aminoimidazole-4-carboxamide ribotide (AICAR or 5-amino-1-(5-phospho-beta-D-ribosyl)imidazole-4-carboxamide) and fumarate, and of adenylosuccinate (ADS or N(6)-(1,2-dicarboxyethyl)-AMP) to adenosine monophosphate (AMP) and fumarate. This chain is Adenylosuccinate lyase (purB), found in Staphylococcus epidermidis (strain ATCC 35984 / DSM 28319 / BCRC 17069 / CCUG 31568 / BM 3577 / RP62A).